The chain runs to 561 residues: Transmembrane protein 209 (561 aa).

Ser11 bears the Phosphoserine mark. Residues 28–48 traverse the membrane as a helical segment; that stretch reads VVLAWGLLNVSMAGMIYTEMT. N-linked (GlcNAc...) asparagine glycosylation occurs at Asn57. A helical transmembrane segment spans residues 60 to 80; the sequence is YWPLWYIELALASLFSLNALF. The residue at position 98 (Ser98) is a Phosphoserine. 2 disordered regions span residues 120–156 and 200–232; these read LAAT…KFAT and SSPY…PTDK. Residues 138–152 are compositionally biased toward low complexity; it reads SVLSYSPSRSPSTSP. A phosphoserine mark is found at Ser201 and Ser248. The interval 250-270 is disordered; the sequence is EEKQHRVKLGSPDSTSPSTSP. A compositionally biased stretch (low complexity) spans 260 to 270; the sequence is SPDSTSPSTSP. Asn274 carries N-linked (GlcNAc...) asparagine glycosylation. A Phosphoserine modification is found at Ser278.

In terms of assembly, interacts with NUP205.

It localises to the membrane. The protein localises to the nucleus envelope. The protein resides in the golgi apparatus. It is found in the cytoplasm. In terms of biological role, nuclear envelope protein which in association with NUP205, may be involved in nuclear transport of various nuclear proteins in addition to MYC. The chain is Transmembrane protein 209 (Tmem209) from Mus musculus (Mouse).